Here is a 538-residue protein sequence, read N- to C-terminus: Beta-1-syntrophin (538 aa).

N-acetylalanine is present on alanine 2. PH domains are found at residues 19 to 298 (RAQR…SNVN) and 322 to 433 (EIRH…QGCH). Serine 87, serine 126, and serine 205 each carry phosphoserine. The region spanning 112-195 (GVKVLKQELG…EVLLEVKYMR (84 aa)) is the PDZ domain. Residues 205 to 237 (SPVSEIGWETPPPESPRLGGSTSDPPSSQSFSF) form a disordered region. Threonine 214 is subject to Phosphothreonine. Phosphoserine occurs at positions 219, 232, 236, and 389. Residues 225 to 236 (STSDPPSSQSFS) are compositionally biased toward low complexity. The SU domain maps to 482-538 (PYEKLKMSSDDGIRMLYLDFGGKDGEIQLDLHSCPKPIVFIIHSFLSAKITRLGLVA). The interval 518 to 538 (PIVFIIHSFLSAKITRLGLVA) is calmodulin-binding.

This sequence belongs to the syntrophin family. As to quaternary structure, monomer and homodimer. Interacts with the other members of the syntrophin family SNTA1 and SNTB2; with the sodium channel proteins SCN4A and SCN5A. Interacts with the viral HTLV-1 TAX protein and with dystrophin protein DMD and related proteins DTNA and UTRN. Interacts with DTNB. Phosphorylated by CaM-kinase II. As to expression, ubiquitous.

It localises to the cell membrane. Its subcellular location is the sarcolemma. The protein resides in the cell junction. It is found in the cytoplasm. The protein localises to the cytoskeleton. Adapter protein that binds to and probably organizes the subcellular localization of a variety of membrane proteins. May link various receptors to the actin cytoskeleton and the dystrophin glycoprotein complex. The sequence is that of Beta-1-syntrophin (SNTB1) from Homo sapiens (Human).